Reading from the N-terminus, the 303-residue chain is uncharacterized protein (303 aa).

Disordered stretches follow at residues 1–89 and 132–159; these read MTSP…NVRS and SELP…STPR. The span at 61-89 shows a compositional bias: polar residues; it reads RASQSGYRPSDPLTTTRQSNPAPGANVRS. Helical transmembrane passes span 205–225 and 264–284; these read LLLS…LYLL and VLVG…AAFV.

It to M.tuberculosis Rv0007.

It localises to the cell membrane. This is an uncharacterized protein from Mycobacterium leprae (strain TN).